A 355-amino-acid chain; its full sequence is Ferrochelatase (355 aa).

Residues histidine 214 and glutamate 295 each coordinate Fe cation.

The protein belongs to the ferrochelatase family.

It localises to the cytoplasm. It catalyses the reaction heme b + 2 H(+) = protoporphyrin IX + Fe(2+). It participates in porphyrin-containing compound metabolism; protoheme biosynthesis; protoheme from protoporphyrin-IX: step 1/1. Its function is as follows. Catalyzes the ferrous insertion into protoporphyrin IX. The sequence is that of Ferrochelatase from Burkholderia thailandensis (strain ATCC 700388 / DSM 13276 / CCUG 48851 / CIP 106301 / E264).